A 253-amino-acid polypeptide reads, in one-letter code: L-cysteine S-thiosulfotransferase subunit SoxA (253 aa).

Positions 1 to 17 are cleaved as a signal peptide; that stretch reads MGKWVTIIFVLFLYAIA. Residues 44 to 129 form the Cytochrome c domain; sequence VYAEQGRDMF…SIATYVATLS (86 aa). Heme c contacts are provided by Cys-64, Cys-67, His-68, Cys-102, Cys-165, Cys-168, and His-169. Arg-210 contributes to the substrate binding site. Cys-214 is a heme c binding site. The Cysteine persulfide intermediate role is filled by Cys-214.

The protein belongs to the SoxA family. As to quaternary structure, heterodimer of SoxA and SoxX. The cofactor is heme c. In terms of processing, cysteine persulfide at Cys-214.

It localises to the periplasm. The enzyme catalyses L-cysteinyl-[SoxY protein] + thiosulfate + 2 Fe(III)-[cytochrome c] = S-sulfosulfanyl-L-cysteinyl-[SoxY protein] + 2 Fe(II)-[cytochrome c] + 2 H(+). The catalysed reaction is S-sulfanyl-L-cysteinyl-[SoxY protein] + thiosulfate + 2 Fe(III)-[cytochrome c] = S-(2-sulfodisulfanyl)-L-cysteinyl-[SoxY protein] + 2 Fe(II)-[cytochrome c] + 2 H(+). Functionally, C-type diheme cytochrome, which is part of the SoxAX cytochrome complex involved in sulfur oxidation. The SoxAX complex catalyzes the formation of a heterodisulfide bond between the conserved cysteine residue on a sulfur carrier SoxYZ complex subunit SoxY and thiosulfate or other inorganic sulfur substrates. This leads to the liberation of two electrons, which may be transferred from the SoxAX complex to another cytochrome c that then channels them into the respiratory electron transport chain. Some electrons may be used for reductive CO(2) fixation. This is L-cysteine S-thiosulfotransferase subunit SoxA from Hydrogenobacter thermophilus (strain DSM 6534 / IAM 12695 / TK-6).